Here is a 99-residue protein sequence, read N- to C-terminus: MPKRKSPENTEGKDGTKLTKQEPTRRSARLSAKPVPPKPESKPRKTSAKKEPGTKISRGAKGKKEEKQEAGEEGTAPSANGDTKVEEAQRTESIEKEGE.

Composition is skewed to basic and acidic residues over residues 1-25 (MPKR…EPTR) and 39-53 (PESK…KEPG). Residues 1 to 99 (MPKRKSPENT…RTESIEKEGE (99 aa)) form a disordered region. Serine 6 is subject to Phosphoserine. Phosphothreonine is present on threonine 10. A phosphoserine mark is found at serine 78 and serine 93. The span at 83 to 99 (TKVEEAQRTESIEKEGE) shows a compositional bias: basic and acidic residues.

It belongs to the HMGN family. In terms of assembly, interacts with the ligand binding domain of the thyroid receptor (TR) (in vitro). Requires the presence of thyroid hormone for its interaction. Interacts with transcriptional regulator SEHBP. Interacts with nucleosomes. As to expression, expressed in the brain, eye, prostate, thyroid, kidney, testis, glial cells and insulin-producing cells of the Langerhans pancreatic islets. In the brain, expressed in the lateral olfactory tract, anterior commissure, corpus callosum, internal capsule, fornix, stria medullans, optic tract, axon bundles, Purkinje cell layer and granular layer of the cerebellum. In retina, expressed in the nuclei of cells in the inner nuclear layer including amacrine, bipolar and horizontal neurons and in the nuclei of ganglion neurons. Detected at low levels in the liver.

It localises to the nucleus. In terms of biological role, binds to nucleosomes, regulating chromatin structure and consequently, chromatin-dependent processes such as transcription, DNA replication and DNA repair. Affects both insulin and glucagon levels and modulates the expression of pancreatic genes involved in insulin secretion. Regulates the expression of the glucose transporter SLC2A2 by binding specifically to its promoter region and recruiting PDX1 and additional transcription factors. Regulates the expression of SLC6A9, a glycine transporter which regulates the glycine concentration in synaptic junctions in the central nervous system, by binding to its transcription start site. May play a role in ocular development and astrocyte function. The polypeptide is High mobility group nucleosome-binding domain-containing protein 3 (Hmgn3) (Mus musculus (Mouse)).